The following is a 490-amino-acid chain: Ketol-acid reductoisomerase (NADP(+)) (490 aa).

In terms of domain architecture, KARI N-terminal Rossmann spans 18-208; that stretch reads AKCRFMDSSE…GGHKAGVLMS (191 aa). Residues 45-48, Arg-68, Arg-76, Ser-78, and 108-110 each bind NADP(+); these read CGAQ and DKQ. Residue His-132 is part of the active site. Gly-158 is an NADP(+) binding site. KARI C-terminal knotted domains lie at 209-344 and 345-486; these read SFIA…KTPA and GDVE…MADM. 4 residues coordinate Mg(2+): Asp-217, Glu-221, Glu-389, and Glu-393. Ser-414 lines the substrate pocket.

The protein belongs to the ketol-acid reductoisomerase family. Requires Mg(2+) as cofactor.

The catalysed reaction is (2R)-2,3-dihydroxy-3-methylbutanoate + NADP(+) = (2S)-2-acetolactate + NADPH + H(+). It catalyses the reaction (2R,3R)-2,3-dihydroxy-3-methylpentanoate + NADP(+) = (S)-2-ethyl-2-hydroxy-3-oxobutanoate + NADPH + H(+). The protein operates within amino-acid biosynthesis; L-isoleucine biosynthesis; L-isoleucine from 2-oxobutanoate: step 2/4. It functions in the pathway amino-acid biosynthesis; L-valine biosynthesis; L-valine from pyruvate: step 2/4. In terms of biological role, involved in the biosynthesis of branched-chain amino acids (BCAA). Catalyzes an alkyl-migration followed by a ketol-acid reduction of (S)-2-acetolactate (S2AL) to yield (R)-2,3-dihydroxy-isovalerate. In the isomerase reaction, S2AL is rearranged via a Mg-dependent methyl migration to produce 3-hydroxy-3-methyl-2-ketobutyrate (HMKB). In the reductase reaction, this 2-ketoacid undergoes a metal-dependent reduction by NADPH to yield (R)-2,3-dihydroxy-isovalerate. In Marinomonas sp. (strain MWYL1), this protein is Ketol-acid reductoisomerase (NADP(+)).